A 112-amino-acid chain; its full sequence is Protein F-112 (112 aa).

Its function is as follows. Essential for virus function. The protein is Protein F-112 of Saccharolobus solfataricus (Sulfolobus solfataricus).